Reading from the N-terminus, the 704-residue chain is Matrix metalloproteinase-9 (704 aa).

The N-terminal stretch at 1–19 (MSPRQPLVLVFLVLGCCSA) is a signal peptide. A propeptide spans 20 to 106 (APRPHKPTVV…PRCGVPDLGK (87 aa)) (activation peptide). N-linked (GlcNAc...) asparagine glycosylation occurs at Asn38. Positions 97–104 (PRCGVPDL) match the Cysteine switch motif. Cys99 is a Zn(2+) binding site. Asn127 is a glycosylation site (N-linked (GlcNAc...) asparagine). Ca(2+)-binding residues include Asp131 and Asp165. The Zn(2+) site is built by His175 and Asp177. Residues Asp182, Gly183, Asn185, and Leu187 each coordinate Ca(2+). His190 is a Zn(2+) binding site. Ca(2+) is bound by residues Gly197, Gln199, and Asp201. Residue His203 participates in Zn(2+) binding. Ca(2+)-binding residues include Asp205, Asp206, and Glu208. Fibronectin type-II domains follow at residues 225-273 (ADGA…FCPS), 283-331 (GDGK…FCPT), and 342-390 (SAGE…FCPD). Intrachain disulfides connect Cys230–Cys256, Cys244–Cys271, Cys288–Cys314, Cys302–Cys329, Cys347–Cys373, and Cys361–Cys388. A Zn(2+)-binding site is contributed by His401. The active site involves Glu402. Residues His405 and His411 each coordinate Zn(2+). The interval 434–507 (DDVRGIQHLY…PSEAPTVPVD (74 aa)) is disordered. 2 stretches are compositionally biased toward pro residues: residues 450–461 (EPQPPTAPPTAP) and 483–496 (TGPP…PPTA). Residues Cys513 and Cys701 are joined by a disulfide bond. Hemopexin repeat units lie at residues 515–560 (VNIF…WPAL), 561–605 (PRKL…GLGP), 607–654 (VTQV…YPGV), and 655–701 (PLNT…ILQC).

Belongs to the peptidase M10A family. In terms of assembly, exists as monomer or homodimer; disulfide-linked. Also exists as heterodimer with LCN2. Macrophages and transformed cell lines produce only the monomeric form. Interacts with ECM1. The cofactor is Zn(2+). It depends on Ca(2+) as a cofactor. Post-translationally, N- and O-glycosylated.

The protein resides in the secreted. It is found in the extracellular space. The protein localises to the extracellular matrix. It carries out the reaction Cleavage of gelatin types I and V and collagen types IV and V.. Its function is as follows. Matrix metalloproteinase that plays an essential role in local proteolysis of the extracellular matrix and in leukocyte migration. Could play a role in bone osteoclastic resorption. Cleaves KiSS1 at a Gly-|-Leu bond. Cleaves NINJ1 to generate the Secreted ninjurin-1 form. Cleaves type IV and type V collagen into large C-terminal three quarter fragments and shorter N-terminal one quarter fragments. Degrades fibronectin but not laminin or Pz-peptide. The sequence is that of Matrix metalloproteinase-9 (MMP9) from Canis lupus familiaris (Dog).